A 152-amino-acid chain; its full sequence is Deoxyuridine 5'-triphosphate nucleotidohydrolase (152 aa).

Substrate is bound by residues 71 to 73 (RSG), Asn84, 88 to 90 (LID), and Met98.

This sequence belongs to the dUTPase family. It depends on Mg(2+) as a cofactor.

It catalyses the reaction dUTP + H2O = dUMP + diphosphate + H(+). It participates in pyrimidine metabolism; dUMP biosynthesis; dUMP from dCTP (dUTP route): step 2/2. In terms of biological role, this enzyme is involved in nucleotide metabolism: it produces dUMP, the immediate precursor of thymidine nucleotides and it decreases the intracellular concentration of dUTP so that uracil cannot be incorporated into DNA. The chain is Deoxyuridine 5'-triphosphate nucleotidohydrolase from Citrobacter koseri (strain ATCC BAA-895 / CDC 4225-83 / SGSC4696).